Reading from the N-terminus, the 873-residue chain is Potassium voltage-gated channel subfamily KQT member 3 (873 aa).

The tract at residues 1 to 41 (MGLKARRAAGAAGGGGGEGGGGGGGAANPAGGDSAVAGDEE) is disordered. Residues 1–121 (MGLKARRAAG…IYDALERPRG (121 aa)) are Cytoplasmic-facing. Gly residues predominate over residues 11–26 (AAGGGGGEGGGGGGGA). At Thr-82 the chain carries Phosphothreonine. A helical transmembrane segment spans residues 122 to 144 (WALLYHALVFLIVLGCLILAVLT). The Extracellular segment spans residues 145–154 (TFKEYETVSG). Residues 155–176 (DWLLLLETFAIFIFGAEFALRI) form a helical membrane-spanning segment. Residues 177-194 (WAAGCCCRYKGWRGRLKF) are Cytoplasmic-facing. The helical transmembrane segment at 195 to 214 (ARKPLCMLDIFVLIASVPVV) threads the bilayer. At 215 to 226 (AVGNQGNVLATS) the chain is on the extracellular side. Residues 227-245 (LRSLRFLQILRMLRMDRRG) traverse the membrane as a helical; Voltage-sensor segment. Arg-244 contacts a 1,2-diacyl-sn-glycero-3-phospho-(1D-myo-inositol-4,5-bisphosphate). Residues 246–257 (GTWKLLGSAICA) lie on the Cytoplasmic side of the membrane. Residues 258–283 (HSKELITAWYIGFLTLILSSFLVYLV) form a helical membrane-spanning segment. Lys-260 contacts a 1,2-diacyl-sn-glycero-3-phospho-(1D-myo-inositol-4,5-bisphosphate). At 284–303 (EKDVPEMDAQGEEMKEEFET) the chain is on the extracellular side. Residues 304–316 (YADALWWGLITLA) constitute an intramembrane region (pore-forming). The Selectivity filter signature appears at 317–322 (TIGYGD). At 317 to 327 (TIGYGDKTPKT) the chain is on the extracellular side. The chain crosses the membrane as a helical span at residues 328 to 354 (WEGRLIAATFSLIGVSFFALPAGILGS). Topologically, residues 355-873 (GLALKVQEQH…SIWTPSNKPT (519 aa)) are cytoplasmic. The mediates interaction with calmodulin stretch occupies residues 357-538 (ALKVQEQHRQ…RLYKKKFKET (182 aa)). A 1,2-diacyl-sn-glycero-3-phospho-(1D-myo-inositol-4,5-bisphosphate) is bound at residue Lys-367. 3 disordered regions span residues 575–603 (PGPP…PRNE), 723–742 (RGGP…GSTY), and 766–873 (ELQG…NKPT). Polar residues-rich tracts occupy residues 588-601 (KGSA…QSPR), 725-741 (GPSS…SGST), and 844-873 (DPFT…NKPT).

It belongs to the potassium channel family. KQT (TC 1.A.1.15) subfamily. Kv7.3/KCNQ3 sub-subfamily. In terms of assembly, heterotetramer with KCNQ2; forms heterotetrameric native M-channel responsible for the M-current. Interacts with calmodulin; the interaction is calcium-independent, constitutive and participates in the proper assembly of a functional M-channel. Heteromultimer with KCNQ5. May associate with KCNE2. Interacts with IQCJ-SCHIP1. Interacts (via the pore module) with SLC5A3/SMIT1; forms a coregulatory complex that alters ion selectivity, voltage dependence and gating kinetics of the channel. In terms of processing, KCNQ2/KCNQ3 are ubiquitinated by NEDD4L. Ubiquitination leads to protein degradation. Degradation induced by NEDD4L is inhibited by USP36. In terms of tissue distribution, expressed in dorsal root ganglion (DRG) neurons.

Its subcellular location is the cell membrane. The catalysed reaction is K(+)(in) = K(+)(out). It catalyses the reaction Rb(+)(in) = Rb(+)(out). The enzyme catalyses Cs(+)(in) = Cs(+)(out). It carries out the reaction Na(+)(in) = Na(+)(out). Phosphatidylinositol-4,5-bisphosphate (PIP2) potentiates the activation of KCNQ channels by enhancing the electro-mechanical coupling of the voltage-sensing domain (VSD) and the pore-forming domain (PD). In the closed state of the channel, PIP2 is anchored at the S2-S3 loop; upon channel activation, PIP2 interacts with the S4-S5 linker and is involved in channel gating. Calcium suppresses KCNQ2-KCNQ3 channel currents, with calcium-bound calmodulin inducing a change in channel configuration which leads to the reduction of channel affinity for PIP2 and subsequent current suppression. In terms of biological role, pore-forming subunit of the voltage-gated potassium (Kv) M-channel which is responsible for the M-current, a key controller of neuronal excitability. M-channel is composed of pore-forming subunits KCNQ2 and KCNQ3 assembled as heterotetramers. The native M-current has a slowly activating and deactivating potassium conductance which plays a critical role in determining the subthreshold electrical excitability of neurons as well as the responsiveness to synaptic inputs. M-channel is selectively permeable in vitro to other cations besides potassium, in decreasing order of affinity K(+) &gt; Rb(+) &gt; Cs(+) &gt; Na(+). M-channel association with SLC5A3/SMIT1 alters channel ion selectivity, increasing Na(+) and Cs(+) permeation relative to K(+). Suppressed by activation of M1 muscarinic acetylcholine receptors. KCNQ3 also associates with KCNQ5 to form a functional channel in vitro and may also contribute to the M-current in brain. This chain is Potassium voltage-gated channel subfamily KQT member 3, found in Mus musculus (Mouse).